We begin with the raw amino-acid sequence, 603 residues long: Threonine--tRNA ligase (603 aa).

The segment at 209-500 (DHRKLGNEMK…LIEHCAGELP (292 aa)) is catalytic. Zn(2+) contacts are provided by Cys-301, His-352, and His-477.

It belongs to the class-II aminoacyl-tRNA synthetase family. Homodimer. Zn(2+) serves as cofactor.

Its subcellular location is the cytoplasm. It carries out the reaction tRNA(Thr) + L-threonine + ATP = L-threonyl-tRNA(Thr) + AMP + diphosphate + H(+). Functionally, catalyzes the attachment of threonine to tRNA(Thr) in a two-step reaction: L-threonine is first activated by ATP to form Thr-AMP and then transferred to the acceptor end of tRNA(Thr). Also edits incorrectly charged L-seryl-tRNA(Thr). This Campylobacter lari (strain RM2100 / D67 / ATCC BAA-1060) protein is Threonine--tRNA ligase.